Here is a 553-residue protein sequence, read N- to C-terminus: MAAESAIIPQLAESITPSSPAATCSGPMAGGDTSSNAHTSIPCQQDIVLDEQTKRELFTDTFCKVCNAVLQFESHRISHYEGKKHAQKVRLYFLKNELEEMALKTQRTDRVEFHVDGEVAQGKHKFCGLCNMVFSSPVVAQTHYVGKVHAKKMRQLAGEQVEWTPQTDQDFAAAAATSPVDSQTEIADSPAVEPTCDRRCEQEGSAEQQSCPDYEIDLNDPNKYCKLCCASFNKALVAQQHYSGKKHARNQARKKMMEEMEGTGVADSEVSDGRYVCPICNITLTSIEMYQSHMQGNKHQIKESMVANLMKTSKKNYDSFQDELADYIKVQKARGLVPKTQFRQEKDQYDSCDYEEEEEQEPEPGLLHGHINSKTNAPYKYLDRHPVPYPAHNPSHPTDQRVPPWAAHWEQASRPPKGHHLDLHKAKHISRSPTSQDSSDNSSGSSSDESSGSYKKDKRRKRKHHRESRLRGSGRIRRGDENSEKRKRKGEDADSGKEDNKHDRGKTSGGDKDKHRREKKKKEEQSKKHKKLKKEGEQRTEEEMLWDESILGF.

The tract at residues 16 to 36 (TPSSPAATCSGPMAGGDTSSN) is disordered. 4 consecutive Matrin-type zinc fingers follow at residues 61 to 91 (TFCK…KVRL), 125 to 155 (KFCG…KMRQ), 223 to 253 (KYCK…NQAR), and 275 to 305 (YVCP…KESM). Disordered stretches follow at residues 341 to 402 (QFRQ…DQRV) and 428 to 553 (HISR…ILGF). The segment covering 350–362 (DSCDYEEEEEQEP) has biased composition (acidic residues). A compositionally biased stretch (low complexity) spans 431–453 (RSPTSQDSSDNSSGSSSDESSGS). Positions 456 to 476 (KDKRRKRKHHRESRLRGSGRI) are enriched in basic residues. A compositionally biased stretch (basic and acidic residues) spans 477 to 513 (RRGDENSEKRKRKGEDADSGKEDNKHDRGKTSGGDKD).

The protein localises to the nucleus. This chain is Zinc finger matrin-type protein 1 (zmat1), found in Xenopus tropicalis (Western clawed frog).